A 170-amino-acid chain; its full sequence is UPF0260 protein Rpal_2074 (170 aa).

This sequence belongs to the UPF0260 family.

This is UPF0260 protein Rpal_2074 from Rhodopseudomonas palustris (strain TIE-1).